We begin with the raw amino-acid sequence, 438 residues long: MAAFSGCASPLSTTLRSGLAPFTLRHRLRLRRLRASAATLREVCAGRVPEHVLQRAEEVGYVVPTEVQEQSLPVLLSGQDCILHAQTGSGKTLAYLLSVFSAIDFGRSSVQALVVVPTRELGMQVTKVARILAAKACTVMALLDGGMLRRQKSWVKAEPPAIIVATVASLCQMIEKRAFSLQSMRVLVIDEVDFIFGSSKQVSSLRKILTSYSAASSRQTIFASASIPQHNRFVHDCVQHKWTKTDVVHVHVNPVQPMPSHLQHKYAICSKKERLHVLLSLLEKDAPKSGIIFVAEQSEKSKKAGHPPSTTVVVEFLRTTYMGSLEVLLLEEDMNFNARATSFTEVKGKGFLLVSTDIASRGFDLPQTSHIYNFDLPKTAIDYLHRAGRTGREPFSKLACSVTTLITEDEHFVLQRFQNELKFHCEELPVESMFAFNL.

A chloroplast-targeting transit peptide spans 1–44; it reads MAAFSGCASPLSTTLRSGLAPFTLRHRLRLRRLRASAATLREVC. The Q motif motif lies at 41 to 69; the sequence is REVCAGRVPEHVLQRAEEVGYVVPTEVQE. Positions 72–245 constitute a Helicase ATP-binding domain; the sequence is LPVLLSGQDC…DCVQHKWTKT (174 aa). 85–92 is a binding site for ATP; sequence AQTGSGKT. Residues 190–193 carry the DEAD box motif; it reads DEVD. Positions 274 to 436 constitute a Helicase C-terminal domain; it reads RLHVLLSLLE…ELPVESMFAF (163 aa).

The protein belongs to the DEAD box helicase family.

It is found in the plastid. The protein localises to the chloroplast. It carries out the reaction ATP + H2O = ADP + phosphate + H(+). This chain is DEAD-box ATP-dependent RNA helicase 58, chloroplastic, found in Oryza sativa subsp. japonica (Rice).